We begin with the raw amino-acid sequence, 177 residues long: B-phycoerythrin beta chain (177 aa).

(2R,3E)-phycoerythrobilin-binding positions include K28, N35, D39, C50, D54, C61, N72, 77–78 (RR), C82, R129, 147–148 (SQ), 154–158 (PQGDC), and C158. N72 carries the N4-methylasparagine modification.

Belongs to the phycobiliprotein family. Heterotetramer of 2 different alpha chains and 2 identical beta chains. The subunit composition could comprise any combination of 2 out of 4 different alpha units with an invariant beta unit. Post-translationally, contains three covalently linked phycoerythrobilin chromophores.

It is found in the plastid. Its subcellular location is the chloroplast thylakoid membrane. In terms of biological role, light-harvesting photosynthetic tetrapyrrole chromophore-protein from the phycobiliprotein complex. The polypeptide is B-phycoerythrin beta chain (cpeB) (Rhodomonas sp. (strain CS 24) (Chroomonas sp. (strain CS24))).